Consider the following 302-residue polypeptide: Ribosomal RNA small subunit methyltransferase H (302 aa).

S-adenosyl-L-methionine-binding positions include 36–38, Asp-56, Phe-84, Asp-99, and Gln-106; that span reads GGH.

Belongs to the methyltransferase superfamily. RsmH family.

It localises to the cytoplasm. The catalysed reaction is cytidine(1402) in 16S rRNA + S-adenosyl-L-methionine = N(4)-methylcytidine(1402) in 16S rRNA + S-adenosyl-L-homocysteine + H(+). Specifically methylates the N4 position of cytidine in position 1402 (C1402) of 16S rRNA. The polypeptide is Ribosomal RNA small subunit methyltransferase H (Christiangramia forsetii (strain DSM 17595 / CGMCC 1.15422 / KT0803) (Gramella forsetii)).